Here is an 85-residue protein sequence, read N- to C-terminus: Alpha-conotoxin Lt28.1 (85 aa).

An N-terminal signal peptide occupies residues 1–21 (MPKLEMMLLVLLILPLCYIDA). A propeptide spanning residues 22-40 (VGPPPPWNMEDEIIEHWQK) is cleaved from the precursor. 4 disulfide bridges follow: Cys61/Cys74, Cys66/Cys84, Cys67/Cys79, and Cys72/Cys81.

It belongs to the conotoxin D superfamily. In terms of tissue distribution, expressed by the venom duct.

It localises to the secreted. Its function is as follows. Alpha-conotoxins act on postsynaptic membranes, they bind to the nicotinic acetylcholine receptors (nAChR) and thus inhibit them. This toxin weakly inhibits alpha-9-alpha-10/CHRNA9-CHRNA10 nAChRs (IC(50)=3 uM). The polypeptide is Alpha-conotoxin Lt28.1 (Conus litteratus (Lettered cone)).